The chain runs to 94 residues: Small ribosomal subunit protein bS18 (94 aa).

Over residues 1–12 the composition is skewed to low complexity; it reads MSEQNSRPQNSE. The segment at 1 to 29 is disordered; that stretch reads MSEQNSRPQNSERPQRSRRPQGGPRRRRK. Residues 16–29 are compositionally biased toward basic residues; sequence RSRRPQGGPRRRRK.

It belongs to the bacterial ribosomal protein bS18 family. Part of the 30S ribosomal subunit. Forms a tight heterodimer with protein bS6.

Binds as a heterodimer with protein bS6 to the central domain of the 16S rRNA, where it helps stabilize the platform of the 30S subunit. This is Small ribosomal subunit protein bS18 from Leuconostoc citreum (strain KM20).